The chain runs to 77 residues: Large ribosomal subunit protein uL24 (77 aa).

It belongs to the universal ribosomal protein uL24 family. In terms of assembly, part of the 50S ribosomal subunit.

Functionally, one of two assembly initiator proteins, it binds directly to the 5'-end of the 23S rRNA, where it nucleates assembly of the 50S subunit. One of the proteins that surrounds the polypeptide exit tunnel on the outside of the subunit. This Sulfurovum sp. (strain NBC37-1) protein is Large ribosomal subunit protein uL24.